We begin with the raw amino-acid sequence, 213 residues long: Probable nicotinate-nucleotide adenylyltransferase (213 aa).

Belongs to the NadD family.

The enzyme catalyses nicotinate beta-D-ribonucleotide + ATP + H(+) = deamido-NAD(+) + diphosphate. The protein operates within cofactor biosynthesis; NAD(+) biosynthesis; deamido-NAD(+) from nicotinate D-ribonucleotide: step 1/1. Its function is as follows. Catalyzes the reversible adenylation of nicotinate mononucleotide (NaMN) to nicotinic acid adenine dinucleotide (NaAD). The protein is Probable nicotinate-nucleotide adenylyltransferase of Escherichia coli O17:K52:H18 (strain UMN026 / ExPEC).